The following is a 647-amino-acid chain: Chaperone protein DnaK (647 aa).

Threonine 199 carries the phosphothreonine; by autocatalysis modification. A disordered region spans residues 602-647 (MYAQEQAQAGQQAGPGAGSASAGQSGEKPVEGEVVDAEFEEVKDKK). Residues 604–627 (AQEQAQAGQQAGPGAGSASAGQSG) are compositionally biased toward low complexity.

The protein belongs to the heat shock protein 70 family.

Acts as a chaperone. The polypeptide is Chaperone protein DnaK (Nitrosomonas eutropha (strain DSM 101675 / C91 / Nm57)).